The primary structure comprises 179 residues: ATP-dependent protease subunit HslV (179 aa).

The active site involves threonine 6. Residues serine 164, cysteine 167, and threonine 170 each contribute to the Na(+) site.

It belongs to the peptidase T1B family. HslV subfamily. As to quaternary structure, a double ring-shaped homohexamer of HslV is capped on each side by a ring-shaped HslU homohexamer. The assembly of the HslU/HslV complex is dependent on binding of ATP.

The protein localises to the cytoplasm. The catalysed reaction is ATP-dependent cleavage of peptide bonds with broad specificity.. Its activity is regulated as follows. Allosterically activated by HslU binding. Its function is as follows. Protease subunit of a proteasome-like degradation complex believed to be a general protein degrading machinery. The polypeptide is ATP-dependent protease subunit HslV (Listeria innocua serovar 6a (strain ATCC BAA-680 / CLIP 11262)).